We begin with the raw amino-acid sequence, 493 residues long: Lysine--tRNA ligase (493 aa).

2 residues coordinate Mg(2+): Glu404 and Glu411.

The protein belongs to the class-II aminoacyl-tRNA synthetase family. In terms of assembly, homodimer. Requires Mg(2+) as cofactor.

Its subcellular location is the cytoplasm. The catalysed reaction is tRNA(Lys) + L-lysine + ATP = L-lysyl-tRNA(Lys) + AMP + diphosphate. In Oceanobacillus iheyensis (strain DSM 14371 / CIP 107618 / JCM 11309 / KCTC 3954 / HTE831), this protein is Lysine--tRNA ligase.